We begin with the raw amino-acid sequence, 347 residues long: Phenylalanine--tRNA ligase alpha subunit (347 aa).

E268 serves as a coordination point for Mg(2+).

This sequence belongs to the class-II aminoacyl-tRNA synthetase family. Phe-tRNA synthetase alpha subunit type 1 subfamily. As to quaternary structure, tetramer of two alpha and two beta subunits. Requires Mg(2+) as cofactor.

It localises to the cytoplasm. The catalysed reaction is tRNA(Phe) + L-phenylalanine + ATP = L-phenylalanyl-tRNA(Phe) + AMP + diphosphate + H(+). The sequence is that of Phenylalanine--tRNA ligase alpha subunit from Leptothrix cholodnii (strain ATCC 51168 / LMG 8142 / SP-6) (Leptothrix discophora (strain SP-6)).